We begin with the raw amino-acid sequence, 269 residues long: Hydroxyethylthiazole kinase (269 aa).

Substrate is bound at residue methionine 45. Residues arginine 121 and threonine 167 each contribute to the ATP site. Glycine 194 contributes to the substrate binding site.

Belongs to the Thz kinase family. Mg(2+) is required as a cofactor.

The catalysed reaction is 5-(2-hydroxyethyl)-4-methylthiazole + ATP = 4-methyl-5-(2-phosphooxyethyl)-thiazole + ADP + H(+). It participates in cofactor biosynthesis; thiamine diphosphate biosynthesis; 4-methyl-5-(2-phosphoethyl)-thiazole from 5-(2-hydroxyethyl)-4-methylthiazole: step 1/1. Its function is as follows. Catalyzes the phosphorylation of the hydroxyl group of 4-methyl-5-beta-hydroxyethylthiazole (THZ). This is Hydroxyethylthiazole kinase from Bacillus licheniformis (strain ATCC 14580 / DSM 13 / JCM 2505 / CCUG 7422 / NBRC 12200 / NCIMB 9375 / NCTC 10341 / NRRL NRS-1264 / Gibson 46).